A 152-amino-acid chain; its full sequence is SsrA-binding protein (152 aa).

Belongs to the SmpB family.

It is found in the cytoplasm. In terms of biological role, required for rescue of stalled ribosomes mediated by trans-translation. Binds to transfer-messenger RNA (tmRNA), required for stable association of tmRNA with ribosomes. tmRNA and SmpB together mimic tRNA shape, replacing the anticodon stem-loop with SmpB. tmRNA is encoded by the ssrA gene; the 2 termini fold to resemble tRNA(Ala) and it encodes a 'tag peptide', a short internal open reading frame. During trans-translation Ala-aminoacylated tmRNA acts like a tRNA, entering the A-site of stalled ribosomes, displacing the stalled mRNA. The ribosome then switches to translate the ORF on the tmRNA; the nascent peptide is terminated with the 'tag peptide' encoded by the tmRNA and targeted for degradation. The ribosome is freed to recommence translation, which seems to be the essential function of trans-translation. The protein is SsrA-binding protein of Rickettsia rickettsii.